We begin with the raw amino-acid sequence, 225 residues long: NAD(P)H-quinone oxidoreductase subunit K, chloroplastic (225 aa).

4 residues coordinate [4Fe-4S] cluster: C43, C44, C108, and C139.

This sequence belongs to the complex I 20 kDa subunit family. In terms of assembly, NDH is composed of at least 16 different subunits, 5 of which are encoded in the nucleus. It depends on [4Fe-4S] cluster as a cofactor.

It is found in the plastid. Its subcellular location is the chloroplast thylakoid membrane. It catalyses the reaction a plastoquinone + NADH + (n+1) H(+)(in) = a plastoquinol + NAD(+) + n H(+)(out). The enzyme catalyses a plastoquinone + NADPH + (n+1) H(+)(in) = a plastoquinol + NADP(+) + n H(+)(out). Its function is as follows. NDH shuttles electrons from NAD(P)H:plastoquinone, via FMN and iron-sulfur (Fe-S) centers, to quinones in the photosynthetic chain and possibly in a chloroplast respiratory chain. The immediate electron acceptor for the enzyme in this species is believed to be plastoquinone. Couples the redox reaction to proton translocation, and thus conserves the redox energy in a proton gradient. The chain is NAD(P)H-quinone oxidoreductase subunit K, chloroplastic from Eucalyptus globulus subsp. globulus (Tasmanian blue gum).